A 97-amino-acid chain; its full sequence is Secreted Ly-6/uPAR domain-containing protein 2 (97 aa).

The signal sequence occupies residues 1-22 (MQLGTGLLLAAVLSLQLAAAEA). Cystine bridges form between cysteine 25/cysteine 47, cysteine 28/cysteine 34, cysteine 40/cysteine 68, cysteine 72/cysteine 88, and cysteine 89/cysteine 94. In terms of domain architecture, UPAR/Ly6 spans 25-95 (CHQCTGFGGC…IACCQTSLCN (71 aa)).

As to quaternary structure, interacts with CHRNA3, CHRNA4, CHRNA5, CHRNA7, CHRNB2 and CHRNB4. Interacts with CHRM1 and CHRM3 probably in an allosteric manner. As to expression, expressed at highest levels in cervix and esophagus, followed by adult and fetal skin. Expressed at lower levels in brain, lung, stomach, small intestine, colon, rectum, uterus, and thymus. Not detected in spleen nor bone marrow. Up-regulated 3-fold in psoriatic lesional skin. In the epidermis, predominantly produced by keratinocytes of the suprabasal epidermal compartment (at protein level). In attached gingiva, produced at highest levels by basal cells located in the lowermost epithelial layers (at protein level). Detected in serum (at protein level).

It localises to the secreted. Its function is as follows. Binds and may modulate the functional properties of nicotinic and muscarinic acetylcholine receptors. May regulate keratinocytes proliferation, differentiation and apoptosis. In vitro moderately inhibits ACh-evoked currents of alpha-3:beta-2-containing nAChRs and strongly these of alpha-4:beta-2-containing nAChRs, modulates alpha-7-containing nAChRs, and inhibits nicotine-induced signaling probably implicating alpha-3:beta-4-containing nAChRs. Proposed to act on alpha-3:beta-2 and alpha-7 nAChRs in an orthosteric, and on mAChRs, such as CHRM1 and CHRM3, in an allosteric manner. The polypeptide is Secreted Ly-6/uPAR domain-containing protein 2 (Homo sapiens (Human)).